The sequence spans 242 residues: MTVTRPRAERGAFPPGTEHYGRSLLGAPLIWFPAPAASRESGLILAGTHGDENSSVVTLSCALRTLTPSLRRHHVVLCVNPDGCQLGLRANANGVDLNRNFPAANWKEGETVYRWNSAAEERDVVLLTGDKPGSEPETQALCQLIHRIQPAWVVSFHDPLACIEDPRHSELGEWLAQAFELPLVTSVGYETPGSFGSWCADLNLHCITAEFPPISSDEASEKYLFAMANLLRWHPKDAIRPS.

The 234-residue stretch at 1–234 (MTVTRPRAER…FAMANLLRWH (234 aa)) folds into the Peptidase M14 domain. Zn(2+) contacts are provided by H49, E52, and H157. Residue E210 is the Proton donor/acceptor of the active site.

This sequence belongs to the peptidase M14 family. Homodimer. Zn(2+) is required as a cofactor.

The protein resides in the cytoplasm. It carries out the reaction L-alanyl-gamma-D-glutamyl-meso-2,6-diaminopimelate + H2O = L-alanyl-D-glutamate + meso-2,6-diaminopimelate. Its pathway is cell wall degradation; peptidoglycan degradation. Functionally, involved in muropeptide degradation. Catalyzes the hydrolysis of the gamma-D-glutamyl-diaminopimelic acid (gamma-D-Glu-Dap) amide bond in the murein tripeptide L-alanyl-gamma-D-glutamyl-meso-diaminopimelic acid, leading to the formation of L-Ala-gamma-D-Glu and Dap. The polypeptide is Murein peptide amidase A (Escherichia coli O157:H7).